We begin with the raw amino-acid sequence, 238 residues long: Large ribosomal subunit protein bL25 (238 aa).

Over residues 1–10 (MATTVKELKA) the composition is skewed to basic and acidic residues. Positions 1-24 (MATTVKELKATARPKSGKGAARAE) are disordered.

The protein belongs to the bacterial ribosomal protein bL25 family. CTC subfamily. As to quaternary structure, part of the 50S ribosomal subunit; part of the 5S rRNA/L5/L18/L25 subcomplex. Contacts the 5S rRNA. Binds to the 5S rRNA independently of L5 and L18.

Its function is as follows. This is one of the proteins that binds to the 5S RNA in the ribosome where it forms part of the central protuberance. The polypeptide is Large ribosomal subunit protein bL25 (Bradyrhizobium diazoefficiens (strain JCM 10833 / BCRC 13528 / IAM 13628 / NBRC 14792 / USDA 110)).